The chain runs to 491 residues: Probable glycine dehydrogenase (decarboxylating) subunit 2 (491 aa).

Residue Lys-274 is modified to N6-(pyridoxal phosphate)lysine.

The protein belongs to the GcvP family. C-terminal subunit subfamily. The glycine cleavage system is composed of four proteins: P, T, L and H. In this organism, the P 'protein' is a heterodimer of two subunits. Requires pyridoxal 5'-phosphate as cofactor.

The enzyme catalyses N(6)-[(R)-lipoyl]-L-lysyl-[glycine-cleavage complex H protein] + glycine + H(+) = N(6)-[(R)-S(8)-aminomethyldihydrolipoyl]-L-lysyl-[glycine-cleavage complex H protein] + CO2. In terms of biological role, the glycine cleavage system catalyzes the degradation of glycine. The P protein binds the alpha-amino group of glycine through its pyridoxal phosphate cofactor; CO(2) is released and the remaining methylamine moiety is then transferred to the lipoamide cofactor of the H protein. This is Probable glycine dehydrogenase (decarboxylating) subunit 2 from Shouchella clausii (strain KSM-K16) (Alkalihalobacillus clausii).